Consider the following 516-residue polypeptide: Protein phosphatase 1H (516 aa).

Disordered regions lie at residues 102 to 122 (ADPS…PSGD) and 181 to 202 (PPTC…SGSQ). The PPM-type phosphatase domain occupies 106–506 (SVSYTPSRRR…DDISVFIIPL (401 aa)). A compositionally biased stretch (polar residues) spans 190-202 (PNPQLHASASGSQ).

It belongs to the PP2C family.

The protein localises to the nucleus. Its subcellular location is the cytoplasm. The enzyme catalyses O-phospho-L-seryl-[protein] + H2O = L-seryl-[protein] + phosphate. It carries out the reaction O-phospho-L-threonyl-[protein] + H2O = L-threonyl-[protein] + phosphate. The polypeptide is Protein phosphatase 1H (ppm1h) (Danio rerio (Zebrafish)).